Consider the following 171-residue polypeptide: NADH-quinone oxidoreductase subunit B (171 aa).

[4Fe-4S] cluster-binding residues include C34, C35, C99, and C128.

This sequence belongs to the complex I 20 kDa subunit family. NDH-1 is composed of 14 different subunits. Subunits NuoB, C, D, E, F, and G constitute the peripheral sector of the complex. Requires [4Fe-4S] cluster as cofactor.

The protein resides in the cell inner membrane. It catalyses the reaction a quinone + NADH + 5 H(+)(in) = a quinol + NAD(+) + 4 H(+)(out). In terms of biological role, NDH-1 shuttles electrons from NADH, via FMN and iron-sulfur (Fe-S) centers, to quinones in the respiratory chain. The immediate electron acceptor for the enzyme in this species is believed to be ubiquinone. Couples the redox reaction to proton translocation (for every two electrons transferred, four hydrogen ions are translocated across the cytoplasmic membrane), and thus conserves the redox energy in a proton gradient. In Sulfurihydrogenibium sp. (strain YO3AOP1), this protein is NADH-quinone oxidoreductase subunit B.